Reading from the N-terminus, the 790-residue chain is RNA-directed RNA polymerase 2a (790 aa).

The RdRp catalytic domain occupies 524-639 (FHFKEIDFSK…GTVEELPRDQ (116 aa)). The tract at residues 771 to 790 (IKPRRVKKSHSDARSRARRA) is disordered. Over residues 779–790 (SHSDARSRARRA) the composition is skewed to basic and acidic residues.

Belongs to the bromoviridae 2a family. In terms of assembly, interacts with replication protein 1a.

It carries out the reaction RNA(n) + a ribonucleoside 5'-triphosphate = RNA(n+1) + diphosphate. Its function is as follows. RNA-dependent RNA polymerase which replicates the viral genome composed of 3 RNA segments, RNA1, RNA2 and RNA3. In Alfalfa mosaic virus (AMV), this protein is RNA-directed RNA polymerase 2a.